We begin with the raw amino-acid sequence, 828 residues long: Transcription factor SOX-6 (828 aa).

Residues 1–51 are disordered; sequence MSSKQATSPFACAADGEDAMTQDLTSREKEEGSDQHVASHLPLHPIMHNKP. Basic and acidic residues predominate over residues 25–34; that stretch reads TSREKEEGSD. At threonine 119 the chain carries Phosphothreonine. Positions 184-262 form a coiled coil; it reads LAEKERQLST…LLQQQIQVQG (79 aa). Residues 380-470 are disordered; the sequence is SPGAKMPSTP…KSSIPSPIGG (91 aa). The span at 393 to 402 shows a compositional bias: polar residues; the sequence is NTAGTVSPTG. The residue at position 399 (serine 399) is a Phosphoserine. Threonine 401 is modified (phosphothreonine). Residues lysine 404 and lysine 417 each participate in a glycyl lysine isopeptide (Lys-Gly) (interchain with G-Cter in SUMO) cross-link. 2 positions are modified to phosphoserine: serine 439 and serine 442. The segment covering 439-461 has biased composition (polar residues); it reads SPTSPTQNLFPASKTSPVNLPNK. Residues 621 to 689 constitute a DNA-binding region (HMG box); it reads IKRPMNAFMV…IHLEKYPNYK (69 aa). Residues 753–781 show a composition bias toward polar residues; the sequence is TPSPQMTSDCSSTSASPEPSLPVIQSTYG. The segment at 753–828 is disordered; that stretch reads TPSPQMTSDC…NEAPEAVSAN (76 aa). Acidic residues predominate over residues 796 to 809; sequence NGEDEMEMYDDYED.

Homodimer. Interacts with DAZAP2. May interact with CENPK. Sumoylation inhibits the transcriptional activity. As to expression, expressed in a wide variety of tissues, most abundantly in skeletal musclen.

The protein resides in the nucleus. It localises to the cytoplasm. Transcription factor that plays a key role in several developmental processes, including neurogenesis, chondrocytes differentiation and cartilage formation. Specifically binds the 5'-AACAAT-3' DNA motif present in enhancers and super-enhancers and promotes expression of genes important for chondrogenesis. Required for overt chondrogenesis when condensed prechondrocytes differentiate into early stage chondrocytes: SOX5 and SOX6 cooperatively bind with SOX9 on active enhancers and super-enhancers associated with cartilage-specific genes, and thereby potentiate SOX9's ability to transactivate. Not involved in precartilaginous condensation, the first step in chondrogenesis, during which skeletal progenitors differentiate into prechondrocytes. Together with SOX5, required to form and maintain a pool of highly proliferating chondroblasts between epiphyses and metaphyses, to form columnar chondroblasts, delay chondrocyte prehypertrophy but promote hypertrophy, and to delay terminal differentiation of chondrocytes on contact with ossification fronts. Binds to the proximal promoter region of the myelin protein MPZ gene, and is thereby involved in the differentiation of oligodendroglia in the developing spinal tube. Binds to the gene promoter of MBP and acts as a transcriptional repressor. This is Transcription factor SOX-6 from Homo sapiens (Human).